The chain runs to 761 residues: Coenzyme PQQ synthesis protein F (761 aa).

Histidine 49 is a Zn(2+) binding site. Residue glutamate 52 is the Proton acceptor of the active site. Residues histidine 53 and glutamate 130 each contribute to the Zn(2+) site.

This sequence belongs to the peptidase M16 family. Zn(2+) is required as a cofactor.

It participates in cofactor biosynthesis; pyrroloquinoline quinone biosynthesis. Functionally, required for coenzyme pyrroloquinoline quinone (PQQ) biosynthesis. It is thought that this protein is a protease that cleaves peptides bond in a small peptide (gene pqqA), providing the glutamate and tyrosine residues which are necessary for the synthesis of PQQ. The chain is Coenzyme PQQ synthesis protein F (pqqF) from Klebsiella pneumoniae.